A 118-amino-acid polypeptide reads, in one-letter code: Large ribosomal subunit protein bL19 (118 aa).

The protein belongs to the bacterial ribosomal protein bL19 family.

In terms of biological role, this protein is located at the 30S-50S ribosomal subunit interface and may play a role in the structure and function of the aminoacyl-tRNA binding site. The protein is Large ribosomal subunit protein bL19 of Salinispora arenicola (strain CNS-205).